Consider the following 721-residue polypeptide: Sodium/hydrogen exchanger 6 (721 aa).

Residues 1 to 44 (MTSPKPWARSAGSCQTQRAVRTRKKECREEGESDTEKGPAASSA) form a disordered region. Over residues 26–37 (ECREEGESDTEK) the composition is skewed to basic and acidic residues. 12 consecutive transmembrane segments (helical) span residues 91 to 111 (SANL…IWLF), 123 to 143 (GLAM…IHVP), 196 to 216 (VTFD…FYAG), 231 to 251 (ILAY…SIMY), 272 to 292 (CLLF…AIFH), 298 to 318 (VELY…AIVL), 344 to 364 (IGIF…TGVV), 388 to 412 (MSWS…FCGI), 434 to 454 (FELL…LTLF), 456 to 476 (FQNH…IFLG), 499 to 519 (NFQH…ALAI), and 535 to 555 (LLIV…MLSC).

This sequence belongs to the monovalent cation:proton antiporter 1 (CPA1) transporter (TC 2.A.36) family. In terms of assembly, homodimer. Interacts with RACK1; regulates the distribution of SLC9A6 between endosomes and the plasma membrane. Ubiquitinated (in vitro). Post-translationally, glycosylated.

The protein resides in the endosome membrane. It localises to the recycling endosome membrane. Its subcellular location is the early endosome membrane. The protein localises to the late endosome membrane. It is found in the cell membrane. It catalyses the reaction Na(+)(in) + H(+)(out) = Na(+)(out) + H(+)(in). It carries out the reaction K(+)(in) + H(+)(out) = K(+)(out) + H(+)(in). Functionally, endosomal Na(+), K(+)/H(+) antiporter. Mediates the electroneutral exchange of endosomal luminal H(+) for a cytosolic Na(+) or K(+). By facilitating proton efflux, SLC9A6 counteracts the acidity generated by vacuolar (V)-ATPase, thereby limiting luminal acidification. Responsible for alkalizing and maintaining the endosomal pH, and consequently in, e.g., endosome maturation and trafficking of recycling endosomal cargo. Plays a critical role during neurodevelopment by regulating synaptic development and plasticity. Implicated in the maintenance of cell polarity in a manner that is dependent on its ability to modulate intravesicular pH. Regulates intracelular pH in some specialized cells, osteoclasts and stereocilia where this transporter localizes to the plasma membrane. This Rattus norvegicus (Rat) protein is Sodium/hydrogen exchanger 6.